A 281-amino-acid chain; its full sequence is Urease accessory protein UreD (281 aa).

Residues 1–25 are disordered; sequence MLNTLEPQPCETDALSPRLQRSTGS.

The protein belongs to the UreD family. In terms of assembly, ureD, UreF and UreG form a complex that acts as a GTP-hydrolysis-dependent molecular chaperone, activating the urease apoprotein by helping to assemble the nickel containing metallocenter of UreC. The UreE protein probably delivers the nickel.

The protein resides in the cytoplasm. In terms of biological role, required for maturation of urease via the functional incorporation of the urease nickel metallocenter. This chain is Urease accessory protein UreD, found in Dinoroseobacter shibae (strain DSM 16493 / NCIMB 14021 / DFL 12).